Consider the following 381-residue polypeptide: Chymosin (381 aa).

An N-terminal signal peptide occupies residues 1 to 16 (MRGFVVLLAVFALSQA). Positions 17 to 58 (SGIVRIPLHKGKSLRRALKERGLLEDFLKNHQHAVSRKHSNS) are cleaved as a propeptide — activation peptide. A Peptidase A1 domain is found at 74-378 (YFGKIYIGTP…DRASNLVGLA (305 aa)). Asp-92 is a catalytic residue. The stretch at 92–102 (DTGSSDLWVPS) is repeat 1. Cystine bridges form between Cys-105–Cys-110 and Cys-265–Cys-269. Asp-274 is a catalytic residue. Repeat 2 spans residues 274 to 284 (DTGTSMLVGPG). The cysteines at positions 308 and 341 are disulfide-linked.

Belongs to the peptidase A1 family. Monomer.

The enzyme catalyses Broad specificity similar to that of pepsin A. Clots milk by cleavage of a single 104-Ser-Phe-|-Met-Ala-107 bond in kappa-chain of casein.. Its activity is regulated as follows. Inhibited by pepstatin. Functionally, hydrolyzes a variety of proteins. The polypeptide is Chymosin (CYM) (Callithrix jacchus (White-tufted-ear marmoset)).